A 309-amino-acid chain; its full sequence is Probable lipid kinase YegS-like (309 aa).

Positions 1-134 constitute a DAGKc domain; it reads MAPSHWRLIL…IDLLRIDADH (134 aa). ATP contacts are provided by residues threonine 39, 65-71, and threonine 96; that span reads GDGTLSE. Positions 219, 222, and 224 each coordinate Mg(2+). Glutamate 280 functions as the Proton acceptor in the catalytic mechanism.

The protein belongs to the diacylglycerol/lipid kinase family. YegS lipid kinase subfamily. Mg(2+) serves as cofactor. Requires Ca(2+) as cofactor.

The protein resides in the cytoplasm. Probably phosphorylates lipids; the in vivo substrate is unknown. The chain is Probable lipid kinase YegS-like from Xanthomonas campestris pv. campestris (strain 8004).